The following is a 122-amino-acid chain: Large ribosomal subunit protein uL14 (122 aa).

It belongs to the universal ribosomal protein uL14 family. As to quaternary structure, part of the 50S ribosomal subunit. Forms a cluster with proteins L3 and L19. In the 70S ribosome, L14 and L19 interact and together make contacts with the 16S rRNA in bridges B5 and B8.

Binds to 23S rRNA. Forms part of two intersubunit bridges in the 70S ribosome. This chain is Large ribosomal subunit protein uL14, found in Clostridium botulinum (strain Alaska E43 / Type E3).